A 468-amino-acid polypeptide reads, in one-letter code: UDP-glycosyltransferase 89B2 (468 aa).

UDP-alpha-D-glucose is bound by residues Ser287, 347–348 (WV), 365–373 (HCGWNSVME), and 387–390 (SADQ).

It belongs to the UDP-glycosyltransferase family.

May glycosylate diterpenes or flavonols in leaves. The chain is UDP-glycosyltransferase 89B2 from Stevia rebaudiana (Stevia).